Here is a 110-residue protein sequence, read N- to C-terminus: Multidrug transporter PA4990 (110 aa).

Helical transmembrane passes span 7 to 27 (LAIA…VAGF), 31 to 51 (LPLL…VLVM), 58 to 78 (VVYA…AMFV), and 85 to 105 (PAAL…QLFS).

Belongs to the drug/metabolite transporter (DMT) superfamily. Small multidrug resistance (SMR) (TC 2.A.7.1) family.

The protein localises to the cell membrane. Confers resistance to ethidium bromide, acriflavine and methyl viologen. This is Multidrug transporter PA4990 from Pseudomonas aeruginosa (strain ATCC 15692 / DSM 22644 / CIP 104116 / JCM 14847 / LMG 12228 / 1C / PRS 101 / PAO1).